Consider the following 254-residue polypeptide: MTILPISAFSDNYIWAFIDKIAGVLDCVDPGEAAPIIRFAQSNQLTLRTILLTHHHYDHIGGVDSLIKQWPSCKVYGPIDERINNVTHPIKQGQSVQVGSLHFHILFNPGHTSTHISYYEPQKGWLFCGDTLFSAGCGRVFDGTIEELHESLLLFKKLPRNTKVFCAHEYTLQNLKFAHTVEPCNSSVINYMQQILKQPSPCTLPSNIDLELSINPFLRTDKEQVKQYALSHGANSSDSLDVFKVLRNQKNSFK.

Residues histidine 54, histidine 56, aspartate 58, histidine 59, histidine 111, aspartate 130, and histidine 168 each coordinate Zn(2+).

Belongs to the metallo-beta-lactamase superfamily. Glyoxalase II family. As to quaternary structure, monomer. Requires Zn(2+) as cofactor.

It catalyses the reaction an S-(2-hydroxyacyl)glutathione + H2O = a 2-hydroxy carboxylate + glutathione + H(+). Its pathway is secondary metabolite metabolism; methylglyoxal degradation; (R)-lactate from methylglyoxal: step 2/2. Functionally, thiolesterase that catalyzes the hydrolysis of S-D-lactoyl-glutathione to form glutathione and D-lactic acid. This Legionella pneumophila (strain Corby) protein is Hydroxyacylglutathione hydrolase.